A 902-amino-acid chain; its full sequence is MNKHLSGSQIRQIWLDFFKSKKHEIIESKSLVPINDPSLLWINAGVATLKKYFSGEENPINPRLANSQRCIRANDIENVGVTSRHHTVFEMLGNFSIGDYFKKEAIEFGYELLTKFYGLNKDKLYITIYEDDNDAFNYWVGQGINPHHIIRCDRKRNFWDLGSGPCGPSTEIYYDRGEKYDPNKLGEKLFFEDIENDRYIEVWNIVFSQFNNTGNNNYTELLRKNIDTGASLERFACILQDVPTNYDTDLYLPIIRTIEKHTNHKYVVDHYFSKDQSEQDVLRAFRVIADHLKCGVFAIADGVLPGAKDRDYIIRKLLRRAFVYAKKLNAKPEYLVETINVIINTYSDFFKYLIPNKEIVIQAITNEANNFTKTLDYGFEIFNEAKTTNNITAETIFKLVETYGFPLDLIKELSAEAKIKLDLDGFEELFKKHQEISKANNGEVGLKKQNENLLKFKTPSKFFYDKNNIKTKVVAIFDDKFNPVDQIEVGSGWAVFESTPIYATSGGQRFDEGYCLKKGNLVVHFDNVIKAPNKQHLHHFKKASFWLNEKVELMHDENWRKLVRKNHSLEHILHATLKNTISETIKQSGAFKSAAKATLDFNYPTRLTDEDLDKIETKMRQVIADKIPVTVHHVDYETSQKMNAIAYFEEEYKKHELLRVIKIGDYSVELCGGTHVDNTKEIEECFITNLYSLGAGRWRIEIMSSYETIYNYLVDKQNEIKQEKDHMFNELGNYDLTHYLDFSKKLHSFNLPNSIKDLRKTLRAFEQIKEEYKAIKLELDKKKTKDRANQIKKLALDNLEHKIVLLFFDKEEHKALSIAHSELVNEKPDHLFFFINKSDNKINYLIGIKNATYKLNAKLLIDKVNAMFGAKGGGKQNFAQGGFSTDKDVGKLKADFVNICIT.

Zn(2+) is bound by residues His567, His571, Cys671, and His675.

The protein belongs to the class-II aminoacyl-tRNA synthetase family. Zn(2+) is required as a cofactor.

The protein localises to the cytoplasm. The enzyme catalyses tRNA(Ala) + L-alanine + ATP = L-alanyl-tRNA(Ala) + AMP + diphosphate. Its function is as follows. Catalyzes the attachment of alanine to tRNA(Ala) in a two-step reaction: alanine is first activated by ATP to form Ala-AMP and then transferred to the acceptor end of tRNA(Ala). Also edits incorrectly charged Ser-tRNA(Ala) and Gly-tRNA(Ala) via its editing domain. The polypeptide is Alanine--tRNA ligase (Mycoplasmoides gallisepticum (strain R(low / passage 15 / clone 2)) (Mycoplasma gallisepticum)).